A 229-amino-acid polypeptide reads, in one-letter code: Small ribosomal subunit protein uS5 (229 aa).

One can recognise an S5 DRBM domain in the interval 61 to 124 (LEEQVLDVKL…AHAKLSLIKV (64 aa)).

Belongs to the universal ribosomal protein uS5 family. In terms of assembly, part of the 30S ribosomal subunit. Contacts protein S4.

Its function is as follows. With S4 and S12 plays an important role in translational accuracy. In Methanococcus maripaludis (strain C7 / ATCC BAA-1331), this protein is Small ribosomal subunit protein uS5.